Here is a 49-residue protein sequence, read N- to C-terminus: Large ribosomal subunit protein bL33A (49 aa).

The protein belongs to the bacterial ribosomal protein bL33 family.

The polypeptide is Large ribosomal subunit protein bL33A (Staphylococcus aureus (strain Mu3 / ATCC 700698)).